A 219-amino-acid polypeptide reads, in one-letter code: Hemolysin-3 (219 aa).

7 helical membrane passes run 19–39 (AITHGIGAILSIPALIILIIH), 49–69 (VVAFTVYGVSMFLLYLFSTLL), 83–103 (ILDHSAIYLLIAGTYTPFLLI), 112–132 (TLLAIIWTLAIGGIIFKIFFV), 138–158 (ASTLCYIIMGWLIIVAIKPLY), 165–185 (GFSLLLAGGILYSVGAIFFLW), and 194–214 (IWHLFVLGGSAMMFFCVLFYV).

It belongs to the UPF0073 (Hly-III) family.

The protein localises to the cell membrane. Might be virulent against a mammalian host; when expressed in E.coli, the soluble extract has hemolytic activity on human erythrocytes. The activity is not inhibited by cholesterol or activated by 2-mercaptoethanol. Might be pore-forming protein. Its in vivo role in virulence is untested, nor has it been shown to be secreted by B.cereus. This Bacillus cereus protein is Hemolysin-3.